A 1110-amino-acid chain; its full sequence is Guanylate cyclase 2D (1110 aa).

The N-terminal stretch at 1-66 is a signal peptide; sequence MAGLQQGCHP…ADSLSLPAWA (66 aa). The Extracellular segment spans residues 67 to 475; sequence RETFTLGVLG…PNTLCIRGVQ (409 aa). A disulfide bridge links Cys121 with Cys149. Residues Asn304 and Asn374 are each glycosylated (N-linked (GlcNAc...) asparagine). Residues 476–500 form a helical membrane-spanning segment; that stretch reads PLGSLLTLTITCVLALVGGFLAYFI. Residues 501–1110 are Cytoplasmic-facing; the sequence is RLGLQQLRLL…TGFAKLARVG (610 aa). The segment at 529 to 556 is disordered; it reads TPSRRRPHVDSGSESRSVVDGGSPQSVI. One can recognise a Protein kinase domain in the interval 541–818; it reads SESRSVVDGG…PSLDQIYTQF (278 aa). The segment at 880 to 921 is interaction with NCALD; the sequence is MGTTVEPEYFDQVTIYFSDIVGFTTISALSEPIEVVGFLNDL. The Guanylate cyclase domain occupies 893-1023; the sequence is TIYFSDIVGF…DTVNTASRME (131 aa).

The protein belongs to the adenylyl cyclase class-4/guanylyl cyclase family. In terms of assembly, interacts (via the catalytic domain) with NCALD. In terms of tissue distribution, specifically expressed in a subpopulation of olfactory sensory neurons. Expressed in the cilia of the olfactory epithelium.

Its subcellular location is the cell projection. It is found in the cilium membrane. The catalysed reaction is GTP = 3',5'-cyclic GMP + diphosphate. With respect to regulation, activated by Ca(2+). Activated by NCALD in a Ca(2+)-dependent fashion. In terms of biological role, functions as an olfactory receptor activated by a urine odorant, uroguanylin. Activated as well by the volatile semiochemicals carbon disulfide (CS2) and carbon dioxide (CO2). Has guanylate cyclase activity upon binding of the ligand. Activation of GUCY2D neurons leads to the cGMP-dependent activation of the CNGA3 channels, membrane depolarization and an increase in action potential frequency. Signaling pathways activated by GUCY2D may trigger social behaviors such as acquisition of food preference. This is Guanylate cyclase 2D (Gucy2d) from Rattus norvegicus (Rat).